We begin with the raw amino-acid sequence, 227 residues long: UPF0758 protein Dred_2549 (227 aa).

The 123-residue stretch at 105-227 (IIRCPEDVCG…FTSLKSKGLI (123 aa)) folds into the MPN domain. The Zn(2+) site is built by His-176, His-178, and Asp-189. The short motif at 176–189 (HNHPSGDPTPSRED) is the JAMM motif element.

This sequence belongs to the UPF0758 family.

The chain is UPF0758 protein Dred_2549 from Desulforamulus reducens (strain ATCC BAA-1160 / DSM 100696 / MI-1) (Desulfotomaculum reducens).